Consider the following 202-residue polypeptide: Endothelin-1 (202 aa).

Residues Met1–Gly25 form the signal peptide. Residues Ala26–Ser50 constitute a propeptide that is removed on maturation. The disordered stretch occupies residues Leu28–Pro47. 2 cysteine pairs are disulfide-bonded: Cys53–Cys67 and Cys55–Cys63. Residues Val74–His202 constitute a propeptide that is removed on maturation. The endothelin-like stretch occupies residues Cys110–Cys124.

Belongs to the endothelin/sarafotoxin family.

The protein resides in the secreted. Functionally, endothelins are endothelium-derived vasoconstrictor peptides. Probable ligand for G-protein coupled receptors EDNRA and EDNRB which activates PTK2B, BCAR1, BCAR3 and, GTPases RAP1 and RHOA cascade in glomerular mesangial cells. Also binds the DEAR/FBXW7-AS1 receptor. Promotes mesenteric arterial wall remodeling via activation of ROCK signaling and subsequent colocalization of NFATC3 with F-actin filaments. NFATC3 then translocates to the nucleus where it subsequently promotes the transcription of the smooth muscle hypertrophy and differentiation marker ACTA2. This Rattus norvegicus (Rat) protein is Endothelin-1 (Edn1).